A 218-amino-acid polypeptide reads, in one-letter code: MGQKINPLGFRLGATQSHRSFWFAQPKNYSDGLQEDEKIRDCIKNYVQKEMRISSGFEGIARIGIQKRIDLIQVIIYIGFPNLLIEGRTRGIEELQSNVQKEFNSGNRRLNVVITRVAKPYGQPNILAEYIAGQLKKRVSFRKAMKKAIELTEQADTKGIQVQIAGRIDGKEIARVEWIREGRVPLQTIRAKIDHCSYMVRTIYGVLGIKIWIFVDED.

The region spanning 47-118 (VQKEMRISSG…RLNVVITRVA (72 aa)) is the KH type-2 domain.

Belongs to the universal ribosomal protein uS3 family. As to quaternary structure, part of the 30S ribosomal subunit.

The protein resides in the plastid. It is found in the chloroplast. This is Small ribosomal subunit protein uS3c (rps3) from Ceratophyllum demersum (Rigid hornwort).